The primary structure comprises 247 residues: MILQPGAWAVADILYEGKAKIIYPTPDPAIVLAVFKDDATAFNAQKRGTISGKGAVNATVSAKLFLLLERSGVPTHYIDQPAANQLLFRRLKMIPLEVVVRNIVAGSLAKRTGLASGTVLGEAIVEFYYKNDALGDPLLNDEHILKVLTTVDALQLAELRRSALQVNAILSAFYRECGIRLVDFKLEYGYDGAGQLQLGDELSPDNCRLWTLEEDRILDKDRFRFDMGEVEGAYQEVLARVIAKAGP.

The protein belongs to the SAICAR synthetase family.

It catalyses the reaction 5-amino-1-(5-phospho-D-ribosyl)imidazole-4-carboxylate + L-aspartate + ATP = (2S)-2-[5-amino-1-(5-phospho-beta-D-ribosyl)imidazole-4-carboxamido]succinate + ADP + phosphate + 2 H(+). Its pathway is purine metabolism; IMP biosynthesis via de novo pathway; 5-amino-1-(5-phospho-D-ribosyl)imidazole-4-carboxamide from 5-amino-1-(5-phospho-D-ribosyl)imidazole-4-carboxylate: step 1/2. The chain is Phosphoribosylaminoimidazole-succinocarboxamide synthase from Gloeobacter violaceus (strain ATCC 29082 / PCC 7421).